A 209-amino-acid polypeptide reads, in one-letter code: CMRF35-like molecule 7 (209 aa).

Residues methionine 1–serine 17 form the signal peptide. The region spanning isoleucine 18–asparagine 120 is the Ig-like V-type domain. The Extracellular portion of the chain corresponds to isoleucine 18–tyrosine 157. Cysteine 36 and cysteine 104 form a disulfide bridge. The N-linked (GlcNAc...) asparagine glycan is linked to asparagine 97. The chain crosses the membrane as a helical span at residues methionine 158–leucine 178. At lysine 179–proline 209 the chain is on the cytoplasmic side. Serine 196 carries the post-translational modification Phosphoserine.

This sequence belongs to the CD300 family. Interacts with TYROBP, which enhances cell surface expression and activation properties. May interact with HCST. N-glycosylated. As to expression, expressed in myeloid cells (at protein level).

It localises to the cell membrane. Acts as an activating immune receptor in mast cells through its interaction with ITAM-bearing adapter TYROBP. This Mus musculus (Mouse) protein is CMRF35-like molecule 7 (Cd300lb).